The following is a 385-amino-acid chain: GDP-mannose-dependent alpha-(1-6)-phosphatidylinositol monomannoside mannosyltransferase (385 aa).

GDP-alpha-D-mannose contacts are provided by Arg205, Lys210, Val262, and Glu299.

The protein belongs to the glycosyltransferase group 1 family. Glycosyltransferase 4 subfamily.

The enzyme catalyses a 1,2-diacyl-sn-glycero-3-phospho-[alpha-D-mannopyranosyl-(1&lt;-&gt;6)-D-myo-inositol] + GDP-alpha-D-mannose = a 2,6-O-bis(alpha-D-mannopyranosyl)-1-phosphatidyl-1D-myo-inositol + GDP + H(+). It catalyses the reaction a 1,2-diacyl-sn-glycero-3-phospho-[alpha-D-6-acyl-mannopyranosyl-(1&lt;-&gt;6)-D-myo-inositol] + GDP-alpha-D-mannose = a 2-O-(alpha-D-mannosyl)-6-O-(6-O-acyl-alpha-D-mannosyl)-1-phosphatidyl-1D-myo-inositol + GDP + H(+). It functions in the pathway phospholipid metabolism; phosphatidylinositol metabolism. Involved in the biosynthesis of phosphatidyl-myo-inositol mannosides (PIM) which are early precursors in the biosynthesis of lipomannans (LM) and lipoarabinomannans (LAM). Catalyzes the addition of a mannosyl residue from GDP-D-mannose (GDP-Man) to the position 6 of a phosphatidyl-myo-inositol bearing an alpha-1,2-linked mannose residue (PIM1) to generate phosphatidyl-myo-inositol bearing alpha-1,2- and alpha-1,6-linked mannose residues (Ac1PIM2). PimB also catalyzes the addition of a mannosyl residue from GDP-Man to the position 6 of phosphatidyl-myo-inositol bearing an acylated alpha-1,2-linked mannose residue (Ac1PIM1) to generate monoacylated phosphatidyl-myo-inositol bearing alpha-1,2- and alpha-1,6-linked mannose residues (Ac1PIM2). The addition of the second mannosyl residue by PimB preferentially occurs before the acylation of the mannosyl residue transferred by PimA. Also able to transfer a mannosyl residue from GDP-Man to the position 6 of a phosphatidyl-myo-inositol (PI), but this reaction is very slow. This Mycobacterium tuberculosis (strain CDC 1551 / Oshkosh) protein is GDP-mannose-dependent alpha-(1-6)-phosphatidylinositol monomannoside mannosyltransferase.